A 257-amino-acid polypeptide reads, in one-letter code: Transmembrane protein 101 (257 aa).

The next 8 membrane-spanning stretches (helical) occupy residues 21–40 (VLLT…LYAE), 52–72 (VPYL…MSFG), 77–97 (WFAL…YVGG), 110–130 (YSRT…AGEL), 139–159 (SLQS…AYSL), 182–202 (LFFV…YVTL), 206–226 (ILAV…AYWH), and 233–253 (FWNQ…AVIL).

It localises to the membrane. Its function is as follows. May activate NF-kappa-B signaling pathways. This chain is Transmembrane protein 101 (TMEM101), found in Bos taurus (Bovine).